The sequence spans 626 residues: Probable potassium transport system protein Kup (626 aa).

Transmembrane regions (helical) follow at residues 8–28 (VALPAMTLAALGVVFGDIGTS), 44–64 (ISEATVFGILSLIFWCITLSI), 102–122 (IYLIALGFVGASLFFGDGIIT), 139–159 (PAFDRWLIPIGLGILTALFMV), 171–191 (FGPITMLWFISIGALGLYSII), 196–216 (ILWFINPIWAIEFAIHQPFVA), 217–237 (FVAMGSVVLTMTGGEALYADM), 249–269 (WFIVVCPSLMLNYAGQGALLL), 281–301 (LLVPEWALFPMIGLATAAAVI), 339–359 (IYVPFINWVLYISVFFLIILF), 377–397 (MLCVTILISVLAYGAWGWPWW), 399–419 (VTLFAVPFLALDGIFVASTSL), and 421–441 (ILSGGWVPFVIGVVVFTILMT).

Belongs to the HAK/KUP transporter (TC 2.A.72) family.

The protein resides in the cell inner membrane. The catalysed reaction is K(+)(in) + H(+)(in) = K(+)(out) + H(+)(out). In terms of biological role, transport of potassium into the cell. Likely operates as a K(+):H(+) symporter. This is Probable potassium transport system protein Kup from Acinetobacter baylyi (strain ATCC 33305 / BD413 / ADP1).